Here is a 123-residue protein sequence, read N- to C-terminus: Small ribosomal subunit protein uS12 (123 aa).

Position 89 is a 3-methylthioaspartic acid (aspartate 89).

This sequence belongs to the universal ribosomal protein uS12 family. Part of the 30S ribosomal subunit. Contacts proteins S8 and S17. May interact with IF1 in the 30S initiation complex.

In terms of biological role, with S4 and S5 plays an important role in translational accuracy. Interacts with and stabilizes bases of the 16S rRNA that are involved in tRNA selection in the A site and with the mRNA backbone. Located at the interface of the 30S and 50S subunits, it traverses the body of the 30S subunit contacting proteins on the other side and probably holding the rRNA structure together. The combined cluster of proteins S8, S12 and S17 appears to hold together the shoulder and platform of the 30S subunit. The sequence is that of Small ribosomal subunit protein uS12 from Sinorhizobium medicae (strain WSM419) (Ensifer medicae).